The following is a 340-amino-acid chain: Glycerol-3-phosphate dehydrogenase [NAD(P)+] (340 aa).

Residues S13, W14, and K108 each coordinate NADPH. The sn-glycerol 3-phosphate site is built by K108, G139, and S141. A143 contacts NADPH. Sn-glycerol 3-phosphate is bound by residues K194, D247, S257, R258, and N259. Residue K194 is the Proton acceptor of the active site. R258 lines the NADPH pocket. NADPH contacts are provided by V282 and E284.

Belongs to the NAD-dependent glycerol-3-phosphate dehydrogenase family.

Its subcellular location is the cytoplasm. It catalyses the reaction sn-glycerol 3-phosphate + NAD(+) = dihydroxyacetone phosphate + NADH + H(+). The catalysed reaction is sn-glycerol 3-phosphate + NADP(+) = dihydroxyacetone phosphate + NADPH + H(+). Its pathway is membrane lipid metabolism; glycerophospholipid metabolism. Functionally, catalyzes the reduction of the glycolytic intermediate dihydroxyacetone phosphate (DHAP) to sn-glycerol 3-phosphate (G3P), the key precursor for phospholipid synthesis. The polypeptide is Glycerol-3-phosphate dehydrogenase [NAD(P)+] (Streptococcus thermophilus (strain CNRZ 1066)).